A 480-amino-acid polypeptide reads, in one-letter code: Siroheme synthase 1 (480 aa).

The segment at 1-203 (MNYLPIFADL…GQLEQAEGEL (203 aa)) is precorrin-2 dehydrogenase /sirohydrochlorin ferrochelatase. Residues 22–23 (EV) and 43–44 (LA) contribute to the NAD(+) site. Position 128 is a phosphoserine (Ser128). The segment at 222-480 (GEVALVGAGP…DSRPAVVNLA (259 aa)) is uroporphyrinogen-III C-methyltransferase. Pro231 is an S-adenosyl-L-methionine binding site. The active-site Proton acceptor is Asp254. Lys276 functions as the Proton donor in the catalytic mechanism. Residues 307–309 (GGD), Ile312, 337–338 (TA), Met389, and Gly418 each bind S-adenosyl-L-methionine.

In the N-terminal section; belongs to the precorrin-2 dehydrogenase / sirohydrochlorin ferrochelatase family. This sequence in the C-terminal section; belongs to the precorrin methyltransferase family.

It catalyses the reaction uroporphyrinogen III + 2 S-adenosyl-L-methionine = precorrin-2 + 2 S-adenosyl-L-homocysteine + H(+). It carries out the reaction precorrin-2 + NAD(+) = sirohydrochlorin + NADH + 2 H(+). The catalysed reaction is siroheme + 2 H(+) = sirohydrochlorin + Fe(2+). The protein operates within cofactor biosynthesis; adenosylcobalamin biosynthesis; precorrin-2 from uroporphyrinogen III: step 1/1. It functions in the pathway cofactor biosynthesis; adenosylcobalamin biosynthesis; sirohydrochlorin from precorrin-2: step 1/1. Its pathway is porphyrin-containing compound metabolism; siroheme biosynthesis; precorrin-2 from uroporphyrinogen III: step 1/1. It participates in porphyrin-containing compound metabolism; siroheme biosynthesis; siroheme from sirohydrochlorin: step 1/1. The protein operates within porphyrin-containing compound metabolism; siroheme biosynthesis; sirohydrochlorin from precorrin-2: step 1/1. Multifunctional enzyme that catalyzes the SAM-dependent methylations of uroporphyrinogen III at position C-2 and C-7 to form precorrin-2 via precorrin-1. Then it catalyzes the NAD-dependent ring dehydrogenation of precorrin-2 to yield sirohydrochlorin. Finally, it catalyzes the ferrochelation of sirohydrochlorin to yield siroheme. This is Siroheme synthase 1 from Pectobacterium atrosepticum (strain SCRI 1043 / ATCC BAA-672) (Erwinia carotovora subsp. atroseptica).